The primary structure comprises 207 residues: MANHQIKAQRRKDEGKGASRRLRHAGMIPAIIYGGDQRPVSIQLNHEQIWLAQQNEWFYSSILDLNVDGGGGEKVLLRDLQRHPYRQLVMHVDFQRVSSDAKLSVAVPLHFINQATSPAGKAGGVVITHELNEVQVSCLPKDLPEFIEVDLSTLNVGHVIHLSDITFPIGVELSTRLDKEHDMAVVIAKHAVIEDDAPAEEGEGDSK.

The segment at 1–20 is disordered; the sequence is MANHQIKAQRRKDEGKGASR.

This sequence belongs to the bacterial ribosomal protein bL25 family. CTC subfamily. In terms of assembly, part of the 50S ribosomal subunit; part of the 5S rRNA/L5/L18/L25 subcomplex. Contacts the 5S rRNA. Binds to the 5S rRNA independently of L5 and L18.

In terms of biological role, this is one of the proteins that binds to the 5S RNA in the ribosome where it forms part of the central protuberance. The polypeptide is Large ribosomal subunit protein bL25 (Xylella fastidiosa (strain M12)).